The following is a 183-amino-acid chain: Small ribosomal subunit protein uS4c (183 aa).

The region spanning 82 to 143 (MRLDNILFRL…KQRSKALIQN (62 aa)) is the S4 RNA-binding domain.

The protein belongs to the universal ribosomal protein uS4 family. In terms of assembly, part of the 30S ribosomal subunit. Contacts protein S5. The interaction surface between S4 and S5 is involved in control of translational fidelity.

It is found in the plastid. The protein resides in the chloroplast. In terms of biological role, one of the primary rRNA binding proteins, it binds directly to 16S rRNA where it nucleates assembly of the body of the 30S subunit. With S5 and S12 plays an important role in translational accuracy. The sequence is that of Small ribosomal subunit protein uS4c (rps4) from Aristea capitata.